Consider the following 382-residue polypeptide: 3-dehydroquinate synthase (382 aa).

NAD(+) is bound by residues 115-119 (GVVGD), 139-140 (TS), Lys-152, and Lys-161. Glu-194, His-256, and His-274 together coordinate Zn(2+).

This sequence belongs to the sugar phosphate cyclases superfamily. Dehydroquinate synthase family. Co(2+) is required as a cofactor. The cofactor is Zn(2+). It depends on NAD(+) as a cofactor.

The protein localises to the cytoplasm. It carries out the reaction 7-phospho-2-dehydro-3-deoxy-D-arabino-heptonate = 3-dehydroquinate + phosphate. It functions in the pathway metabolic intermediate biosynthesis; chorismate biosynthesis; chorismate from D-erythrose 4-phosphate and phosphoenolpyruvate: step 2/7. Functionally, catalyzes the conversion of 3-deoxy-D-arabino-heptulosonate 7-phosphate (DAHP) to dehydroquinate (DHQ). The sequence is that of 3-dehydroquinate synthase from Rhodopseudomonas palustris (strain BisB18).